We begin with the raw amino-acid sequence, 377 residues long: Succinyl-diaminopimelate desuccinylase (377 aa).

H67 contributes to the Zn(2+) binding site. D69 is an active-site residue. D100 provides a ligand contact to Zn(2+). E134 (proton acceptor) is an active-site residue. The Zn(2+) site is built by E135, E163, and H349.

The protein belongs to the peptidase M20A family. DapE subfamily. Homodimer. It depends on Zn(2+) as a cofactor. Co(2+) is required as a cofactor.

It catalyses the reaction N-succinyl-(2S,6S)-2,6-diaminopimelate + H2O = (2S,6S)-2,6-diaminopimelate + succinate. It functions in the pathway amino-acid biosynthesis; L-lysine biosynthesis via DAP pathway; LL-2,6-diaminopimelate from (S)-tetrahydrodipicolinate (succinylase route): step 3/3. Catalyzes the hydrolysis of N-succinyl-L,L-diaminopimelic acid (SDAP), forming succinate and LL-2,6-diaminopimelate (DAP), an intermediate involved in the bacterial biosynthesis of lysine and meso-diaminopimelic acid, an essential component of bacterial cell walls. In Buchnera aphidicola subsp. Baizongia pistaciae (strain Bp), this protein is Succinyl-diaminopimelate desuccinylase.